The primary structure comprises 861 residues: Nuclear cap-binding protein complex subunit 1 (861 aa).

Positions 22-30 (RMPKRQRIP) match the Nuclear localization signal motif. Positions 36–264 (CKEMMPDIRT…LVRVVLPNVK (229 aa)) constitute an MIF4G domain.

The protein belongs to the NCBP1 family. In terms of assembly, component of the nuclear cap-binding complex (CBC), a heterodimer composed of STO1/CBC1 and CBC2 that interacts with capped RNAs. The complex interacts strongly with the importin subunit alpha SRP1. The SRP1-CBC trimer also binds to capped RNAs, but formation of the importin alpha/beta heterodimer upon binding of KAP95 to SRP1 in the cytoplasm causes dissociation of CBC from the RNA. The CBC complex is part of the commitment complex 1 (CC1), binding to the cap of pre-mRNA and interacting with U1 snRNP subunits MUD2 and SNU56. The CBC complex is part of the NRD1 complex, composed of CBC2, NAB1, NRD1, SEN1 and STO1/CBC2. The CBC complex also interacts with NPL3 and eIF4G (TIF4631 and TIF4632).

Its subcellular location is the nucleus. The protein resides in the cytoplasm. It localises to the perinuclear region. Component of the CBC complex, which binds co-transcriptionally to the 5'-cap of pre-mRNAs and is involved in maturation, export and degradation of nuclear mRNAs. The CBC complex is required for efficient pre-mRNA splicing through efficient commitment complex and spliceosome formation. Together with NPL3, the CBC complex is required for export of mRNAs out of the nucleus. The CBC complex is also involved in nuclear mRNA degradation, probably by directing the mRNAs to the sites of degradation. Affects replication of the positive-strand RNA virus BMV. The protein is Nuclear cap-binding protein complex subunit 1 (STO1) of Saccharomyces cerevisiae (strain ATCC 204508 / S288c) (Baker's yeast).